Consider the following 864-residue polypeptide: Disintegrin and metalloproteinase domain-containing protein 15 (864 aa).

Residues methionine 1–proline 17 form the signal peptide. The tract at residues proline 17–valine 49 is disordered. A propeptide spanning residues arginine 18–arginine 208 is cleaved from the precursor. The span at glutamine 34–valine 49 shows a compositional bias: polar residues. The N-linked (GlcNAc...) asparagine glycan is linked to asparagine 57. The short motif at histidine 178 to histidine 185 is the Cysteine switch element. Cysteine 180 is a binding site for Zn(2+). The Extracellular portion of the chain corresponds to aspartate 209–threonine 698. In terms of domain architecture, Peptidase M12B spans lysine 215–proline 416. The N-linked (GlcNAc...) asparagine glycan is linked to asparagine 239. Intrachain disulfides connect cysteine 325-cysteine 411, cysteine 367-cysteine 395, cysteine 369-cysteine 378, and cysteine 482-cysteine 502. Residue histidine 350 participates in Zn(2+) binding. Glutamate 351 is an active-site residue. Zn(2+) is bound by residues histidine 354 and histidine 360. Asparagine 391 and asparagine 394 each carry an N-linked (GlcNAc...) asparagine glycan. The region spanning serine 423–aspartate 510 is the Disintegrin domain. N-linked (GlcNAc...) asparagine glycosylation is found at asparagine 608 and asparagine 613. Intrachain disulfides connect cysteine 659–cysteine 669, cysteine 663–cysteine 675, and cysteine 677–cysteine 686. The EGF-like domain maps to cysteine 659–methionine 687. The helical transmembrane segment at glycine 699–tyrosine 719 threads the bilayer. A phosphotyrosine; by HCK and LCK mark is found at tyrosine 717 and tyrosine 737. Topologically, residues arginine 720 to leucine 864 are cytoplasmic. Residues arginine 738 to leucine 864 form a disordered region. Positions arginine 753–valine 765 are enriched in polar residues. Composition is skewed to pro residues over residues proline 768–valine 780 and proline 810–alanine 825. An SH3-binding motif is present at residues proline 816–proline 822. A compositionally biased stretch (low complexity) spans asparagine 826–serine 850. The SH3-binding signature appears at arginine 851 to proline 857.

Interacts with ITAGV-ITGB3 (vitronectin receptor). Interacts with SH3GL2 and SNX9; this interaction occurs preferentially with ADAM15 precursor, rather than the processed form, suggesting it occurs in a secretory pathway compartment prior to the medial Golgi. Interacts with ITAG9-ITGB1. Interacts specifically with Src family protein-tyrosine kinases (PTKs). Interacts with SH3PXD2A. Interacts with ITAGV-ITGB1. Interacts with GRB2, HCK, ITSN1, ITSN2, LYN, MAPK1, MAPK3, NCF1, NCK1, nephrocystin, PTK6, SNX33, LCK and SRC. Zn(2+) is required as a cofactor. Post-translationally, the precursor is cleaved by a furin endopeptidase. In terms of processing, phosphorylation increases association with PTKs. In terms of tissue distribution, predominantly expressed in brain, spinal cord, sciatic nerve and lung. Expressed at lower levels in all other tissues. In the peripheral nervous system, expressed predominantly by Schwann cells. In the central nervous system, preferentially expressed by neuronal cells.

The protein localises to the endomembrane system. Its subcellular location is the cell junction. It localises to the adherens junction. It is found in the cell projection. The protein resides in the cilium. The protein localises to the flagellum. Its subcellular location is the cytoplasmic vesicle. It localises to the secretory vesicle. It is found in the acrosome. In terms of biological role, active metalloproteinase with gelatinolytic and collagenolytic activity. Plays a role in the wound healing process. Mediates both heterotypic intraepithelial cell/T-cell interactions and homotypic T-cell aggregation. Inhibits beta-1 integrin-mediated cell adhesion and migration of airway smooth muscle cells. Suppresses cell motility on or towards fibronectin possibly by driving alpha-v/beta-1 integrin (ITAGV-ITGB1) cell surface expression via ERK1/2 inactivation. Cleaves E-cadherin in response to growth factor deprivation. Plays a role in glomerular cell migration. Plays a role in pathological neovascularization. May play a role in cartilage remodeling. May be proteolytically processed, during sperm epididymal maturation and the acrosome reaction. May play a role in sperm-egg binding through its disintegrin domain. In Rattus norvegicus (Rat), this protein is Disintegrin and metalloproteinase domain-containing protein 15 (Adam15).